Here is a 316-residue protein sequence, read N- to C-terminus: Olfactory receptor 1165 (316 aa).

Topologically, residues 1–28 (MMLDLGNESSVTMFILSGFSEYPHLHAP) are extracellular. Residue Asn-7 is glycosylated (N-linked (GlcNAc...) asparagine). A helical membrane pass occupies residues 29–50 (LFLLFFMIYTVTLIGNLGIIVV). At 51–61 (RKVNPKLHTPM) the chain is on the cytoplasmic side. The helical transmembrane segment at 62–80 (YFFLSHLSFLDICYSSVFT) threads the bilayer. At 81–99 (PKLLEILIVEDRTISFKGC) the chain is on the extracellular side. Cys-99 and Cys-181 are oxidised to a cystine. Residues 100–122 (MTQFFLICAFVITEMFMLAVMAY) form a helical membrane-spanning segment. Residues 123–141 (DRFVAVCNPLLYTVSMSPK) lie on the Cytoplasmic side of the membrane. The helical transmembrane segment at 142–166 (LCAFLVAGTYMWGVLCSLTITYSLL) threads the bilayer. Residues 167–205 (QLSYCGPNIINHFGCEYSAILSLSCSDPTFSQVVCLTIS) are Extracellular-facing. The chain crosses the membrane as a helical span at residues 206–228 (IFNETCSLLIILASYVFIVVTII). The Cytoplasmic segment spans residues 229 to 239 (KMPSKGGLQKA). The chain crosses the membrane as a helical span at residues 240–263 (FSTCSSHLTAISIFHGIILLLYCV). At 264–268 (PNSKN) the chain is on the extracellular side. The chain crosses the membrane as a helical span at residues 269 to 291 (SWLVVKVATVLFTVMIPMLNPLI). Residues 292 to 316 (YSLRNKDVKGTVSRLMHLKLQAHST) lie on the Cytoplasmic side of the membrane.

It belongs to the G-protein coupled receptor 1 family.

Its subcellular location is the cell membrane. Its function is as follows. Olfactory receptor. The protein is Olfactory receptor 1165 of Mus musculus (Mouse).